Reading from the N-terminus, the 228-residue chain is Nucleolar protein 12 (228 aa).

The segment at 1–22 (MGKSDRLQQGSKGKGGGKRKHG) is disordered. A coiled-coil region spans residues 40–103 (FHKRKLERRR…AITATTECVQ (64 aa)). The segment covering 126 to 145 (LLEPAQRDGGDGEERERTEA) has biased composition (basic and acidic residues). The disordered stretch occupies residues 126–228 (LLEPAQRDGG…QTGRNERSQD (103 aa)). Positions 158 to 170 (KIQSLTASLNSLV) are enriched in polar residues. Residues 171–180 (KQKKRRKQKR) are compositionally biased toward basic residues. Basic and acidic residues predominate over residues 181–195 (RQEAKQRSHQSDRKS). Residues 204–220 (NKQKQGKSTKRQRRRQT) are compositionally biased toward basic residues.

Belongs to the RRP17 family.

Its subcellular location is the nucleus. The protein localises to the nucleolus. In terms of biological role, may bind to rRNA. The protein is Nucleolar protein 12 (nol12) of Danio rerio (Zebrafish).